The following is a 344-amino-acid chain: GTP 3',8-cyclase (344 aa).

The Radical SAM core domain occupies 19 to 244 (PFGRTISYLR…MDLAESTGGP (226 aa)). Arginine 28 is a binding site for GTP. Residues cysteine 35 and cysteine 39 each contribute to the [4Fe-4S] cluster site. Tyrosine 41 is an S-adenosyl-L-methionine binding site. Cysteine 42 serves as a coordination point for [4Fe-4S] cluster. Residue arginine 77 participates in GTP binding. S-adenosyl-L-methionine is bound at residue glycine 81. A GTP-binding site is contributed by threonine 111. S-adenosyl-L-methionine is bound at residue serine 135. Lysine 171 is a GTP binding site. S-adenosyl-L-methionine is bound at residue methionine 205. Cysteine 268 and cysteine 271 together coordinate [4Fe-4S] cluster. 273–275 (RVR) is a GTP binding site. Residue cysteine 285 coordinates [4Fe-4S] cluster.

The protein belongs to the radical SAM superfamily. MoaA family. As to quaternary structure, monomer and homodimer. Requires [4Fe-4S] cluster as cofactor.

The enzyme catalyses GTP + AH2 + S-adenosyl-L-methionine = (8S)-3',8-cyclo-7,8-dihydroguanosine 5'-triphosphate + 5'-deoxyadenosine + L-methionine + A + H(+). Its pathway is cofactor biosynthesis; molybdopterin biosynthesis. Its function is as follows. Catalyzes the cyclization of GTP to (8S)-3',8-cyclo-7,8-dihydroguanosine 5'-triphosphate. This Bradyrhizobium diazoefficiens (strain JCM 10833 / BCRC 13528 / IAM 13628 / NBRC 14792 / USDA 110) protein is GTP 3',8-cyclase.